The sequence spans 338 residues: Probable beta-1,4-xylosyltransferase IRX9 (338 aa).

The interval 1-21 (MASAGGCKKKTGNSRSRSPRS) is disordered. Topologically, residues 1–27 (MASAGGCKKKTGNSRSRSPRSPVVLRR) are cytoplasmic. A helical; Signal-anchor for type II membrane protein membrane pass occupies residues 28–46 (AMLHSSLCFLVGLLAGLAA). At 47-338 (PSDWPAAAGA…IMLWRIQTTL (292 aa)) the chain is on the lumenal side. N-linked (GlcNAc...) asparagine glycosylation is found at asparagine 232 and asparagine 314.

It belongs to the glycosyltransferase 43 family.

The protein localises to the golgi apparatus membrane. In terms of biological role, probable beta-1,4-xylosyltransferase involved in xylan biosynthesis in cell walls. The sequence is that of Probable beta-1,4-xylosyltransferase IRX9 from Oryza sativa subsp. japonica (Rice).